Consider the following 333-residue polypeptide: Ribosomal RNA small subunit methyltransferase C (333 aa).

It belongs to the methyltransferase superfamily. RsmC family. In terms of assembly, monomer.

It localises to the cytoplasm. It carries out the reaction guanosine(1207) in 16S rRNA + S-adenosyl-L-methionine = N(2)-methylguanosine(1207) in 16S rRNA + S-adenosyl-L-homocysteine + H(+). Specifically methylates the guanine in position 1207 of 16S rRNA in the 30S particle. The sequence is that of Ribosomal RNA small subunit methyltransferase C from Mannheimia succiniciproducens (strain KCTC 0769BP / MBEL55E).